A 96-amino-acid chain; its full sequence is Co-chaperonin GroES (96 aa).

The protein belongs to the GroES chaperonin family. As to quaternary structure, heptamer of 7 subunits arranged in a ring. Interacts with the chaperonin GroEL.

It localises to the cytoplasm. Functionally, together with the chaperonin GroEL, plays an essential role in assisting protein folding. The GroEL-GroES system forms a nano-cage that allows encapsulation of the non-native substrate proteins and provides a physical environment optimized to promote and accelerate protein folding. GroES binds to the apical surface of the GroEL ring, thereby capping the opening of the GroEL channel. This Methylibium petroleiphilum (strain ATCC BAA-1232 / LMG 22953 / PM1) protein is Co-chaperonin GroES.